Consider the following 203-residue polypeptide: MREFLVLFNHAPTSPDRVRLKDLPGSGRFDLVCRVTTQALLYSHGVRTDTVVHLLLRGPDDPPKTITVTGRRVRRLYPDERTTAIHLRRALEADPDTEPHPGIFVRRADLEDLLGEMKGAKLYYLSEDGRDLEEVEPEPDAVFVLGDHEGPTPEQDRLLRRHADAVISLGPIPYHADQCIVILHRYLDVKRPPEYAHGPSNVM.

S-adenosyl-L-methionine-binding residues include Leu-125, Gly-146, and Cys-179.

The protein belongs to the methyltransferase superfamily. TrmY family. As to quaternary structure, homodimer.

Its subcellular location is the cytoplasm. The enzyme catalyses pseudouridine(54) in tRNA + S-adenosyl-L-methionine = N(1)-methylpseudouridine(54) in tRNA + S-adenosyl-L-homocysteine + H(+). Specifically catalyzes the N1-methylation of pseudouridine at position 54 (Psi54) in tRNAs. The chain is tRNA (pseudouridine(54)-N(1))-methyltransferase from Methanopyrus kandleri (strain AV19 / DSM 6324 / JCM 9639 / NBRC 100938).